We begin with the raw amino-acid sequence, 485 residues long: Peroxisomal catalase (485 aa).

Catalysis depends on residues histidine 53 and asparagine 126. Residue tyrosine 336 coordinates heme.

The protein belongs to the catalase family. Homotetramer. The cofactor is heme.

Its subcellular location is the peroxisome matrix. It catalyses the reaction 2 H2O2 = O2 + 2 H2O. In terms of biological role, catalyzes the degradation of hydrogen peroxide (H(2)O(2)) generated by peroxisomal oxidases to water and oxygen, thereby protecting cells from the toxic effects of hydrogen peroxide. The sequence is that of Peroxisomal catalase (POX9) from Candida tropicalis (Yeast).